A 330-amino-acid chain; its full sequence is 2-phospho-L-lactate transferase (330 aa).

D49 contacts 7,8-didemethyl-8-hydroxy-5-deazariboflavin.

This sequence belongs to the CofD family. Homodimer. It depends on Mg(2+) as a cofactor.

The catalysed reaction is (2S)-lactyl-2-diphospho-5'-guanosine + 7,8-didemethyl-8-hydroxy-5-deazariboflavin = oxidized coenzyme F420-0 + GMP + H(+). Its pathway is cofactor biosynthesis; coenzyme F420 biosynthesis. Catalyzes the transfer of the 2-phospholactate moiety from (2S)-lactyl-2-diphospho-5'-guanosine to 7,8-didemethyl-8-hydroxy-5-deazariboflavin (FO) with the formation of oxidized coenzyme F420-0 and GMP. This is 2-phospho-L-lactate transferase from Haloarcula marismortui (strain ATCC 43049 / DSM 3752 / JCM 8966 / VKM B-1809) (Halobacterium marismortui).